A 330-amino-acid chain; its full sequence is Ferredoxin--NADP reductase (330 aa).

Positions 18, 37, 45, 50, 90, 124, 286, and 327 each coordinate FAD.

Belongs to the ferredoxin--NADP reductase type 2 family. Homodimer. It depends on FAD as a cofactor.

The catalysed reaction is 2 reduced [2Fe-2S]-[ferredoxin] + NADP(+) + H(+) = 2 oxidized [2Fe-2S]-[ferredoxin] + NADPH. This Halalkalibacterium halodurans (strain ATCC BAA-125 / DSM 18197 / FERM 7344 / JCM 9153 / C-125) (Bacillus halodurans) protein is Ferredoxin--NADP reductase.